The sequence spans 158 residues: 2-C-methyl-D-erythritol 2,4-cyclodiphosphate synthase (158 aa).

A divalent metal cation-binding residues include Asp-9 and His-11. 4-CDP-2-C-methyl-D-erythritol 2-phosphate-binding positions include Asp-9–His-11 and His-35–Ser-36. An a divalent metal cation-binding site is contributed by His-43. 4-CDP-2-C-methyl-D-erythritol 2-phosphate is bound by residues Asp-57–Gly-59, Phe-62–Asp-66, Ala-101–Ala-107, Thr-133–Glu-136, Phe-140, and Arg-143.

The protein belongs to the IspF family. In terms of assembly, homotrimer. A divalent metal cation is required as a cofactor.

It carries out the reaction 4-CDP-2-C-methyl-D-erythritol 2-phosphate = 2-C-methyl-D-erythritol 2,4-cyclic diphosphate + CMP. It functions in the pathway isoprenoid biosynthesis; isopentenyl diphosphate biosynthesis via DXP pathway; isopentenyl diphosphate from 1-deoxy-D-xylulose 5-phosphate: step 4/6. Functionally, involved in the biosynthesis of isopentenyl diphosphate (IPP) and dimethylallyl diphosphate (DMAPP), two major building blocks of isoprenoid compounds. Catalyzes the conversion of 4-diphosphocytidyl-2-C-methyl-D-erythritol 2-phosphate (CDP-ME2P) to 2-C-methyl-D-erythritol 2,4-cyclodiphosphate (ME-CPP) with a corresponding release of cytidine 5-monophosphate (CMP). The polypeptide is 2-C-methyl-D-erythritol 2,4-cyclodiphosphate synthase (Lysinibacillus sphaericus (strain C3-41)).